We begin with the raw amino-acid sequence, 345 residues long: Annexin A9 (345 aa).

Annexin repeat units follow at residues 41-112 (FSAD…ALLQ), 113-184 (PAAH…ALAK), 197-266 (NLAA…NLAS), and 270-341 (NTPL…ALCR).

This sequence belongs to the annexin family. As to quaternary structure, homodimer.

May act as a low affinity receptor for acetylcholine. The protein is Annexin A9 (ANXA9) of Bos taurus (Bovine).